We begin with the raw amino-acid sequence, 418 residues long: Serine proteinase inhibitor 2.4 (418 aa).

The signal sequence occupies residues 1 to 28 (MAFIAALGIFMAGICPAVLCFPNGTLGR). Residues asparagine 23, asparagine 38, asparagine 104, and asparagine 269 are each glycosylated (N-linked (GlcNAc...) asparagine).

Belongs to the serpin family.

The protein localises to the secreted. This chain is Serine proteinase inhibitor 2.4, found in Apodemus sylvaticus (European woodmouse).